A 101-amino-acid chain; its full sequence is Small ribosomal subunit protein bS18c (101 aa).

The protein belongs to the bacterial ribosomal protein bS18 family. In terms of assembly, part of the 30S ribosomal subunit.

The protein localises to the plastid. It is found in the chloroplast. In Lepidium virginicum (Virginia pepperweed), this protein is Small ribosomal subunit protein bS18c.